We begin with the raw amino-acid sequence, 94 residues long: NADH dehydrogenase [ubiquinone] iron-sulfur protein 3, mitochondrial (94 aa).

This sequence belongs to the complex I 30 kDa subunit family. In terms of assembly, core subunit of respiratory chain NADH dehydrogenase (Complex I) which is composed of 45 different subunits. Interacts with NDUFAF3. Interacts with RAB5IF. Found in subcomplexes containing subunits NDUFS2, MT-ND1 and NDUFA13.

The protein resides in the mitochondrion inner membrane. It catalyses the reaction a ubiquinone + NADH + 5 H(+)(in) = a ubiquinol + NAD(+) + 4 H(+)(out). Functionally, core subunit of the mitochondrial membrane respiratory chain NADH dehydrogenase (Complex I) which catalyzes electron transfer from NADH through the respiratory chain, using ubiquinone as an electron acceptor. Essential for the catalytic activity and assembly of complex I. The protein is NADH dehydrogenase [ubiquinone] iron-sulfur protein 3, mitochondrial of Mesocricetus auratus (Golden hamster).